A 344-amino-acid polypeptide reads, in one-letter code: Uroporphyrinogen decarboxylase (344 aa).

Substrate-binding positions include R23–R27, D73, Y149, T204, and H321.

The protein belongs to the uroporphyrinogen decarboxylase family. In terms of assembly, homodimer.

It localises to the cytoplasm. The enzyme catalyses uroporphyrinogen III + 4 H(+) = coproporphyrinogen III + 4 CO2. It functions in the pathway porphyrin-containing compound metabolism; protoporphyrin-IX biosynthesis; coproporphyrinogen-III from 5-aminolevulinate: step 4/4. Its function is as follows. Catalyzes the decarboxylation of four acetate groups of uroporphyrinogen-III to yield coproporphyrinogen-III. This is Uroporphyrinogen decarboxylase from Francisella tularensis subsp. mediasiatica (strain FSC147).